The sequence spans 159 residues: Major allergen Mal d 1 (159 aa).

Belongs to the BetVI family.

The polypeptide is Major allergen Mal d 1 (Malus domestica (Apple)).